The primary structure comprises 394 residues: Ketoisovalerate oxidoreductase subunit VorA (394 aa).

As to quaternary structure, heterotetramer of one alpha, one beta, one delta and one gamma chain.

The enzyme catalyses 3-methyl-2-oxobutanoate + 2 oxidized [2Fe-2S]-[ferredoxin] + CoA = 2-methylpropanoyl-CoA + 2 reduced [2Fe-2S]-[ferredoxin] + CO2 + H(+). This Pyrococcus furiosus (strain ATCC 43587 / DSM 3638 / JCM 8422 / Vc1) protein is Ketoisovalerate oxidoreductase subunit VorA (vorA).